Consider the following 184-residue polypeptide: Inosine triphosphate pyrophosphatase (184 aa).

10-15 (TGNANK) provides a ligand contact to ITP. A Mg(2+)-binding site is contributed by Glu38. Residues Lys50, 66–67 (DT), Lys83, 142–145 (FGWD), Lys163, and 168–169 (HR) contribute to the ITP site.

This sequence belongs to the HAM1 NTPase family. In terms of assembly, homodimer. Mg(2+) serves as cofactor. Requires Mn(2+) as cofactor.

The protein localises to the cytoplasm. Its subcellular location is the nucleus. The catalysed reaction is ITP + H2O = IMP + diphosphate + H(+). The enzyme catalyses dITP + H2O = dIMP + diphosphate + H(+). It catalyses the reaction XTP + H2O = XMP + diphosphate + H(+). Its function is as follows. Pyrophosphatase that hydrolyzes non-canonical purine nucleotides such as inosine triphosphate (ITP), deoxyinosine triphosphate (dITP) or xanthosine 5'-triphosphate (XTP) to their respective monophosphate derivatives. The enzyme does not distinguish between the deoxy- and ribose forms. Probably excludes non-canonical purines from RNA and DNA precursor pools, thus preventing their incorporation into RNA and DNA and avoiding chromosomal lesions. The polypeptide is Inosine triphosphate pyrophosphatase (Fusarium vanettenii (strain ATCC MYA-4622 / CBS 123669 / FGSC 9596 / NRRL 45880 / 77-13-4) (Fusarium solani subsp. pisi)).